Reading from the N-terminus, the 86-residue chain is Exodeoxyribonuclease 7 small subunit (86 aa).

A disordered region spans residues 67-86 (LSDPAQPEASEPFDPPSHDG).

It belongs to the XseB family. Heterooligomer composed of large and small subunits.

It is found in the cytoplasm. The enzyme catalyses Exonucleolytic cleavage in either 5'- to 3'- or 3'- to 5'-direction to yield nucleoside 5'-phosphates.. Functionally, bidirectionally degrades single-stranded DNA into large acid-insoluble oligonucleotides, which are then degraded further into small acid-soluble oligonucleotides. This Stenotrophomonas maltophilia (strain K279a) protein is Exodeoxyribonuclease 7 small subunit.